Consider the following 244-residue polypeptide: Phosphoadenosine 5'-phosphosulfate reductase (244 aa).

Cys239 (nucleophile; cysteine thiosulfonate intermediate) is an active-site residue.

Belongs to the PAPS reductase family. CysH subfamily.

It localises to the cytoplasm. The catalysed reaction is [thioredoxin]-disulfide + sulfite + adenosine 3',5'-bisphosphate + 2 H(+) = [thioredoxin]-dithiol + 3'-phosphoadenylyl sulfate. Its pathway is sulfur metabolism; hydrogen sulfide biosynthesis; sulfite from sulfate: step 3/3. Its function is as follows. Catalyzes the formation of sulfite from phosphoadenosine 5'-phosphosulfate (PAPS) using thioredoxin as an electron donor. The sequence is that of Phosphoadenosine 5'-phosphosulfate reductase from Salmonella choleraesuis (strain SC-B67).